Reading from the N-terminus, the 219-residue chain is NADH-ubiquinone oxidoreductase 23 kDa subunit, mitochondrial (219 aa).

2 4Fe-4S ferredoxin-type domains span residues 111–140 and 150–179; these read RRYP…IEAE and TRYD…ESPN. 8 residues coordinate [4Fe-4S] cluster: C120, C123, C126, C130, C159, C162, C165, and C169.

The protein belongs to the complex I 23 kDa subunit family. As to quaternary structure, complex I is composed of about 40 different subunits. Requires [4Fe-4S] cluster as cofactor.

Its subcellular location is the mitochondrion. The enzyme catalyses a ubiquinone + NADH + 5 H(+)(in) = a ubiquinol + NAD(+) + 4 H(+)(out). In terms of biological role, core subunit of the mitochondrial membrane respiratory chain NADH dehydrogenase (Complex I) that is believed to belong to the minimal assembly required for catalysis. Complex I functions in the transfer of electrons from NADH to the respiratory chain. The immediate electron acceptor for the enzyme is believed to be ubiquinone. May donate electrons to ubiquinone. This chain is NADH-ubiquinone oxidoreductase 23 kDa subunit, mitochondrial (nuo21.3c), found in Neurospora crassa (strain ATCC 24698 / 74-OR23-1A / CBS 708.71 / DSM 1257 / FGSC 987).